Consider the following 495-residue polypeptide: Chromosomal replication initiator protein DnaA (495 aa).

The tract at residues 1–83 is domain I, interacts with DnaA modulators; the sequence is MSVALWQQCL…KVQLTVGSRR (83 aa). A domain II region spans residues 83–158; it reads RNVAMSSPRD…QVEGSLKHQS (76 aa). Positions 86–127 are disordered; it reads AMSSPRDLGAPVSATTMNASRPTEAPAVHAAPRAKGDYADEQ. The tract at residues 159–375 is domain III, AAA+ region; it reads GLNPNFTFET…GALKKVIADS (217 aa). ATP is bound by residues Gly-203, Gly-205, Lys-206, and Thr-207. The domain IV, binds dsDNA stretch occupies residues 376–495; the sequence is HFMGKPITQD…YKNLLRLLTS (120 aa).

The protein belongs to the DnaA family. Oligomerizes as a right-handed, spiral filament on DNA at oriC.

The protein localises to the cytoplasm. Plays an essential role in the initiation and regulation of chromosomal replication. ATP-DnaA binds to the origin of replication (oriC) to initiate formation of the DNA replication initiation complex once per cell cycle. Binds the DnaA box (a 9 base pair repeat at the origin) and separates the double-stranded (ds)DNA. Forms a right-handed helical filament on oriC DNA; dsDNA binds to the exterior of the filament while single-stranded (ss)DNA is stabiized in the filament's interior. The ATP-DnaA-oriC complex binds and stabilizes one strand of the AT-rich DNA unwinding element (DUE), permitting loading of DNA polymerase. After initiation quickly degrades to an ADP-DnaA complex that is not apt for DNA replication. Binds acidic phospholipids. In Chromohalobacter salexigens (strain ATCC BAA-138 / DSM 3043 / CIP 106854 / NCIMB 13768 / 1H11), this protein is Chromosomal replication initiator protein DnaA.